Reading from the N-terminus, the 235-residue chain is Elongation factor Tu (235 aa).

The tr-type G domain maps to 1–125 (KNMITGATQM…DGDKYIPTPS (125 aa)). GTP is bound at residue 47–50 (NKQD).

Belongs to the TRAFAC class translation factor GTPase superfamily. Classic translation factor GTPase family. EF-Tu/EF-1A subfamily. Monomer.

It localises to the cytoplasm. The enzyme catalyses GTP + H2O = GDP + phosphate + H(+). GTP hydrolase that promotes the GTP-dependent binding of aminoacyl-tRNA to the A-site of ribosomes during protein biosynthesis. This Leptolyngbya boryana (Plectonema boryanum) protein is Elongation factor Tu (tufA).